Here is a 1426-residue protein sequence, read N- to C-terminus: Epidermal growth factor receptor (1426 aa).

A signal peptide spans 1-30 (MLLRRRNGPCPFPLLLLLLAHCICIWPASA). At 31–868 (ARDRYARQNN…SKITANLDVN (838 aa)) the chain is on the extracellular side. 11 N-linked (GlcNAc...) asparagine glycosylation sites follow: asparagine 128, asparagine 241, asparagine 419, asparagine 443, asparagine 482, asparagine 569, asparagine 599, asparagine 617, asparagine 816, asparagine 823, and asparagine 828. The helical transmembrane segment at 869–889 (MIFIITGAVLVPTICILCVVT) threads the bilayer. The Cytoplasmic portion of the chain corresponds to 890-1426 (YICRQKQKAK…HRNRNTETRV (537 aa)). Threonine 902 bears the Phosphothreonine; by PKC mark. One can recognise a Protein kinase domain in the interval 938–1198 (LRKGGVLGMG…QLTTVFAEFA (261 aa)). Residues 944-952 (LGMGAFGRV) and lysine 971 contribute to the ATP site. Aspartate 1063 acts as the Proton acceptor in catalysis. The interval 1232–1297 (PTTDGSEAIA…DSSAREVGVG (66 aa)) is disordered. A compositionally biased stretch (basic and acidic residues) spans 1257-1276 (HRTDCTDEMPKLNRYCKDPS). Phosphotyrosine; by autocatalysis is present on tyrosine 1310.

The protein belongs to the protein kinase superfamily. Tyr protein kinase family. EGF receptor subfamily. Homodimer. Binding of the ligand spitz triggers homodimerization of the receptor however, it is able to form dimers, albeit weakly, in the absence of spitz. Interacts (when phosphorylated on tyrosine residues) with Vav (via SH2 domain). Interacts (when ubiquitinated) with Graf. May interact (when phosphorylated) with EGFRAP (via SH2 domain). In terms of processing, ubiquitination by Cbl in response to high spi, promotes its interaction with Graf and thus facilitates its GPI-enriched endocytic compartment (GEEC) mediated endocytosis and its subsequent degradation. As to expression, ubiquitously expressed in embryos. In larvae, uniform expression is seen in wing disks, genital disk, anlagen of testis and ovary, and brain cortex. In eye-antenna disk, highest expression is anterior to morphogenetic furrow, levels remain high in photoreceptor precursor cells. This pattern is reversed in posterior eye disk. In adults expression is high in brain cortex and thoracic and abdominal ganglia.

Its subcellular location is the membrane. The catalysed reaction is L-tyrosyl-[protein] + ATP = O-phospho-L-tyrosyl-[protein] + ADP + H(+). Receptor tyrosine kinase, binding ligands of the EGF family and activating several signaling cascades to convert extracellular cues into appropriate cellular responses. Known ligands include spitz, gurken, vein and giant-lens. Transduces the signal through the ras-raf-MAPK pathway. Critical for the proliferation of imaginal tissues, and for the determination of both the antero-posterior and dorso-ventral polarities of the oocyte. In the embryo, plays a role in the establishment of ventral cell fates, maintenance of amnioserosa and ventral neuroectodermal cells, germ band retraction, cell fate specification in the central nervous system, and production and repair of the cuticle. During dorsal closure (DC) functions with the dpp- and ACK-signaling pathways to regulate expression of the myosin zip in the embryonic epidermis and amnioserosa (AS), and thus coordinate the progression of epidermal cell shape changes required for correct DC. In the embryonic epidermis, functions by negatively regulating dpp and consequently the dpp-dependent expression of the myosin zip. In the AS, negatively regulates the production/ and or secretion of a diffusible signal which, is produced by the ACK-signaling pathway, and acts in the AS and epidermal cells to promote zip expression. Also required in the AS to inhibit or delay apoptosis, and consequently slow the rate of DC. Therefore functions at multiple levels to negatively regulate morphogenesis during DC, suggesting that it acts as a general brake mechanism for adjusting the rate of dorsal closure to ensure that closure proceeds smoothly and without loss of epidermal integrity. During oogenesis, one of two tyrosine kinase chemoattractant receptors (Egfr and Pvr), that function in the border cells (BC) to detect guidance cues from the oocyte and transduce this information to the guidance pathway that regulate the collective migration of the BC cluster through the nurse cells to the oocyte. This chain is Epidermal growth factor receptor (Egfr), found in Drosophila melanogaster (Fruit fly).